The sequence spans 889 residues: Alanine--tRNA ligase (889 aa).

Zn(2+) is bound by residues H564, H568, C677, and H681.

It belongs to the class-II aminoacyl-tRNA synthetase family. Requires Zn(2+) as cofactor.

Its subcellular location is the cytoplasm. It catalyses the reaction tRNA(Ala) + L-alanine + ATP = L-alanyl-tRNA(Ala) + AMP + diphosphate. In terms of biological role, catalyzes the attachment of alanine to tRNA(Ala) in a two-step reaction: alanine is first activated by ATP to form Ala-AMP and then transferred to the acceptor end of tRNA(Ala). Also edits incorrectly charged Ser-tRNA(Ala) and Gly-tRNA(Ala) via its editing domain. The polypeptide is Alanine--tRNA ligase (Rhodopseudomonas palustris (strain ATCC BAA-98 / CGA009)).